A 226-amino-acid chain; its full sequence is Urease accessory protein UreF (226 aa).

The protein belongs to the UreF family. UreD, UreF and UreG form a complex that acts as a GTP-hydrolysis-dependent molecular chaperone, activating the urease apoprotein by helping to assemble the nickel containing metallocenter of UreC. The UreE protein probably delivers the nickel.

The protein localises to the cytoplasm. In terms of biological role, required for maturation of urease via the functional incorporation of the urease nickel metallocenter. The polypeptide is Urease accessory protein UreF (Paraburkholderia phymatum (strain DSM 17167 / CIP 108236 / LMG 21445 / STM815) (Burkholderia phymatum)).